The chain runs to 229 residues: Uracil-DNA glycosylase (229 aa).

D64 (proton acceptor) is an active-site residue.

This sequence belongs to the uracil-DNA glycosylase (UDG) superfamily. UNG family.

The protein resides in the cytoplasm. The enzyme catalyses Hydrolyzes single-stranded DNA or mismatched double-stranded DNA and polynucleotides, releasing free uracil.. Excises uracil residues from the DNA which can arise as a result of misincorporation of dUMP residues by DNA polymerase or due to deamination of cytosine. The polypeptide is Uracil-DNA glycosylase (Escherichia coli (strain 55989 / EAEC)).